The chain runs to 359 residues: MSALTPHVYWAQRHGEIYLRVEISDAQDLSIGVEENILQFRGQGHGAKGENEYEFSLEFLKPVKPEVKHKSTQRQVNITVRKQEEVWWNRLTKQEKKPLFLAPDFDRWLDESDAEMELREKEEKINKVSFESRVRKDPFLGLKKGFLFMYNLVQFLGYSWIFVNMTVRLFILGQDSFYDTFHTIADVMYFCQMLAIMEVINPAVGLVKTGVMPAFIQVMGRNFILFVIFGSLEDMQNKPVVFFVFYLWSTIEIFRYPFYMLACIDTEWKLLTWLRYTIWMPLYPLGVLAEAVAVIQSIPIFDETKLLSIPLPKATGLSLSFSYILQLYLVVMFLGLFINFRHLFKQRTRRFRTKKRKAN.

The Cytoplasmic portion of the chain corresponds to 1–144 (MSALTPHVYW…RKDPFLGLKK (144 aa)). A CS domain is found at 3–92 (ALTPHVYWAQ…QEEVWWNRLT (90 aa)). A coiled-coil region spans residues 109–133 (LDESDAEMELREKEEKINKVSFESR). A helical transmembrane segment spans residues 145 to 165 (GFLFMYNLVQFLGYSWIFVNM). Topologically, residues 166-186 (TVRLFILGQDSFYDTFHTIAD) are lumenal. Residues 187-207 (VMYFCQMLAIMEVINPAVGLV) traverse the membrane as a helical segment. Topologically, residues 208 to 209 (KT) are cytoplasmic. The chain crosses the membrane as a helical span at residues 210–230 (GVMPAFIQVMGRNFILFVIFG). At 231–239 (SLEDMQNKP) the chain is on the lumenal side. The chain crosses the membrane as a helical span at residues 240-260 (VVFFVFYLWSTIEIFRYPFYM). Over 261–277 (LACIDTEWKLLTWLRYT) the chain is Cytoplasmic. Residues 278–298 (IWMPLYPLGVLAEAVAVIQSI) traverse the membrane as a helical segment. Residues Y283 and E290 contribute to the active site. The Lumenal portion of the chain corresponds to 299–317 (PIFDETKLLSIPLPKATGL). Residues 318-338 (SLSFSYILQLYLVVMFLGLFI) traverse the membrane as a helical segment. The Cytoplasmic segment spans residues 339-359 (NFRHLFKQRTRRFRTKKRKAN).

Belongs to the very long-chain fatty acids dehydratase HACD family.

It localises to the endoplasmic reticulum membrane. The catalysed reaction is a very-long-chain (3R)-3-hydroxyacyl-CoA = a very-long-chain (2E)-enoyl-CoA + H2O. The enzyme catalyses (3R)-hydroxyhexadecanoyl-CoA = (2E)-hexadecenoyl-CoA + H2O. It participates in lipid metabolism; fatty acid biosynthesis. Its function is as follows. Catalyzes the third of the four reactions of the long-chain fatty acids elongation cycle. This endoplasmic reticulum-bound enzymatic process, allows the addition of two carbons to the chain of long- and very long-chain fatty acids/VLCFAs per cycle. This enzyme catalyzes the dehydration of the 3-hydroxyacyl-CoA intermediate into trans-2,3-enoyl-CoA, within each cycle of fatty acid elongation. Thereby, it participates in the production of VLCFAs of different chain lengths that are involved in multiple biological processes as precursors of membrane lipids and lipid mediators. Involved in Rac1-signaling pathways leading to the modulation of gene expression. In Danio rerio (Zebrafish), this protein is Very-long-chain (3R)-3-hydroxyacyl-CoA dehydratase.